The chain runs to 349 residues: MAGPAIHTAPMLFLVLLLPLELSLAGALAPGTPARNLPENHIDLPGPALWTPQASHHRRRGPGKKEWGPGLPSQAQDGAVVTATRQASRLPEAEGLLPEQSPAGLLQDKDLLLGLALPYPEKENRPPGWERTRKRSREHKRRRDRLRLHQGRALVRGPSSLMKKAELSEAQVLDAAMEESSTSLAPTMFFLTTFEAAPATEESLILPVTSLRPQQAQPRSDGEVMPTLDMALFDWTDYEDLKPDGWPSAKKKEKHRGKLSSDGNETSPAEGEPCDHHQDCLPGTCCDLREHLCTPHNRGLNNKCFDDCMCVEGLRCYAKFHRNRRVTRRKGRCVEPETANGDQGSFINV.

A signal peptide spans 1–25 (MAGPAIHTAPMLFLVLLLPLELSLA). 3 disordered regions span residues 38-79 (PENH…QDGA), 118-145 (PYPEKENRPPGWERTRKRSREHKRRRDR), and 244-273 (DGWPSAKKKEKHRGKLSSDGNETSPAEGEP). The segment covering 120–131 (PEKENRPPGWER) has biased composition (basic and acidic residues). Composition is skewed to basic residues over residues 132–145 (TRKRSREHKRRRDR) and 249–258 (AKKKEKHRGK). Residue Asn264 is glycosylated (N-linked (GlcNAc...) asparagine).

This sequence belongs to the draxin family. In terms of assembly, interacts with LRP6.

It is found in the secreted. In terms of biological role, chemorepulsive axon guidance protein required for the development of spinal cord and forebrain commissures. Acts as a chemorepulsive guidance protein for commissural axons during development. Able to inhibit or repel neurite outgrowth from dorsal spinal cord. Inhibits the stabilization of cytosolic beta-catenin (CTNNB1) via its interaction with LRP6, thereby acting as an antagonist of Wnt signaling pathway. The protein is Draxin of Homo sapiens (Human).